Here is a 1245-residue protein sequence, read N- to C-terminus: ATP-dependent helicase/deoxyribonuclease subunit B (1245 aa).

Positions 737 to 758 are disordered; it reads WDDQNNAPTTDLPDRPNPRASE. The segment covering 748–758 has biased composition (basic and acidic residues); the sequence is LPDRPNPRASE.

It belongs to the helicase family. AddB/RexB type 2 subfamily. Heterodimer of AddA and RexB. Mg(2+) serves as cofactor.

In terms of biological role, the heterodimer acts as both an ATP-dependent DNA helicase and an ATP-dependent, dual-direction single-stranded exonuclease. Recognizes the chi site generating a DNA molecule suitable for the initiation of homologous recombination. This subunit has 5' -&gt; 3' nuclease activity but not helicase activity. The polypeptide is ATP-dependent helicase/deoxyribonuclease subunit B (Limosilactobacillus fermentum (strain NBRC 3956 / LMG 18251) (Lactobacillus fermentum)).